The chain runs to 290 residues: 33 kDa chaperonin (290 aa).

Disulfide bonds link Cys-234–Cys-236 and Cys-267–Cys-270.

This sequence belongs to the HSP33 family. Under oxidizing conditions two disulfide bonds are formed involving the reactive cysteines. Under reducing conditions zinc is bound to the reactive cysteines and the protein is inactive.

It is found in the cytoplasm. Functionally, redox regulated molecular chaperone. Protects both thermally unfolding and oxidatively damaged proteins from irreversible aggregation. Plays an important role in the bacterial defense system toward oxidative stress. The protein is 33 kDa chaperonin of Colwellia psychrerythraea (strain 34H / ATCC BAA-681) (Vibrio psychroerythus).